The chain runs to 136 residues: Large ribosomal subunit protein eL27 (136 aa).

The region spanning 5-40 (MKPGKVVMVLAGRYAGRKAVIVKNIDDGTADRPYSH) is the KOW domain.

This sequence belongs to the eukaryotic ribosomal protein eL27 family. As to quaternary structure, component of the large ribosomal subunit.

The protein localises to the cytoplasm. The protein resides in the cytosol. It localises to the rough endoplasmic reticulum. Component of the large ribosomal subunit. In Ictalurus punctatus (Channel catfish), this protein is Large ribosomal subunit protein eL27 (rpl27).